Here is a 505-residue protein sequence, read N- to C-terminus: ATP synthase subunit beta (505 aa).

158–165 is an ATP binding site; sequence GGAGVGKT.

Belongs to the ATPase alpha/beta chains family. F-type ATPases have 2 components, CF(1) - the catalytic core - and CF(0) - the membrane proton channel. CF(1) has five subunits: alpha(3), beta(3), gamma(1), delta(1), epsilon(1). CF(0) has three main subunits: a(1), b(2) and c(9-12). The alpha and beta chains form an alternating ring which encloses part of the gamma chain. CF(1) is attached to CF(0) by a central stalk formed by the gamma and epsilon chains, while a peripheral stalk is formed by the delta and b chains.

The protein localises to the cell inner membrane. It carries out the reaction ATP + H2O + 4 H(+)(in) = ADP + phosphate + 5 H(+)(out). Functionally, produces ATP from ADP in the presence of a proton gradient across the membrane. The catalytic sites are hosted primarily by the beta subunits. The sequence is that of ATP synthase subunit beta from Parabacteroides distasonis (strain ATCC 8503 / DSM 20701 / CIP 104284 / JCM 5825 / NCTC 11152).